Reading from the N-terminus, the 63-residue chain is Large ribosomal subunit protein uL30 (63 aa).

This sequence belongs to the universal ribosomal protein uL30 family. In terms of assembly, part of the 50S ribosomal subunit.

This is Large ribosomal subunit protein uL30 from Stenotrophomonas maltophilia (strain K279a).